Here is a 350-residue protein sequence, read N- to C-terminus: Phospho-N-acetylmuramoyl-pentapeptide-transferase (350 aa).

Transmembrane regions (helical) follow at residues 28–48 (LPLLIAAVCATATAAVGIPLL), 70–90 (GTPTMGGLLVVPVGVVLGSLI), 100–120 (LLSLAVLTLAFMLIGGIDDWS), 136–156 (LLLQAMATAAFLAIAAWQGWI), 164–184 (FGLELPLGLMIWPLGLFVVLA), 195–215 (LDGLASGCGALVFTGLALQLM), 221–241 (GDPALAGFCMAMAGAWLGFLV), 249–269 (AFMGDTGSLAMGAALSGVALL), and 328–348 (QSVVPAFWLVTAGLVLLGLVL).

Belongs to the glycosyltransferase 4 family. MraY subfamily. The cofactor is Mg(2+).

Its subcellular location is the cell inner membrane. The enzyme catalyses UDP-N-acetyl-alpha-D-muramoyl-L-alanyl-gamma-D-glutamyl-meso-2,6-diaminopimeloyl-D-alanyl-D-alanine + di-trans,octa-cis-undecaprenyl phosphate = di-trans,octa-cis-undecaprenyl diphospho-N-acetyl-alpha-D-muramoyl-L-alanyl-D-glutamyl-meso-2,6-diaminopimeloyl-D-alanyl-D-alanine + UMP. It functions in the pathway cell wall biogenesis; peptidoglycan biosynthesis. Its function is as follows. Catalyzes the initial step of the lipid cycle reactions in the biosynthesis of the cell wall peptidoglycan: transfers peptidoglycan precursor phospho-MurNAc-pentapeptide from UDP-MurNAc-pentapeptide onto the lipid carrier undecaprenyl phosphate, yielding undecaprenyl-pyrophosphoryl-MurNAc-pentapeptide, known as lipid I. This Synechococcus sp. (strain CC9605) protein is Phospho-N-acetylmuramoyl-pentapeptide-transferase.